We begin with the raw amino-acid sequence, 209 residues long: dITP/XTP pyrophosphatase (209 aa).

Position 7 to 12 (7 to 12 (SSHGYK)) interacts with substrate. Asp70 serves as the catalytic Proton acceptor. Position 70 (Asp70) interacts with Mg(2+). Residues Ser71, 154-157 (FGYD), Lys177, and 182-183 (HR) contribute to the substrate site.

It belongs to the HAM1 NTPase family. Homodimer. The cofactor is Mg(2+).

The catalysed reaction is XTP + H2O = XMP + diphosphate + H(+). The enzyme catalyses dITP + H2O = dIMP + diphosphate + H(+). It carries out the reaction ITP + H2O = IMP + diphosphate + H(+). Pyrophosphatase that catalyzes the hydrolysis of nucleoside triphosphates to their monophosphate derivatives, with a high preference for the non-canonical purine nucleotides XTP (xanthosine triphosphate), dITP (deoxyinosine triphosphate) and ITP. Seems to function as a house-cleaning enzyme that removes non-canonical purine nucleotides from the nucleotide pool, thus preventing their incorporation into DNA/RNA and avoiding chromosomal lesions. The chain is dITP/XTP pyrophosphatase from Chlamydia muridarum (strain MoPn / Nigg).